Here is a 318-residue protein sequence, read N- to C-terminus: NADH-ubiquinone oxidoreductase chain 1 (318 aa).

8 consecutive transmembrane segments (helical) span residues 2–22, 70–90, 100–120, 140–160, 172–192, 217–237, 253–273, and 294–314; these read FLVN…FLTL, MFIM…TPLP, LGVL…LWSG, ISYE…SGSF, LWLI…TLAE, GGSF…MNAI, EFYT…FLWI, and LPLT…TASI.

The protein belongs to the complex I subunit 1 family. In terms of assembly, core subunit of respiratory chain NADH dehydrogenase (Complex I) which is composed of 45 different subunits.

The protein localises to the mitochondrion inner membrane. It catalyses the reaction a ubiquinone + NADH + 5 H(+)(in) = a ubiquinol + NAD(+) + 4 H(+)(out). Functionally, core subunit of the mitochondrial membrane respiratory chain NADH dehydrogenase (Complex I) which catalyzes electron transfer from NADH through the respiratory chain, using ubiquinone as an electron acceptor. Essential for the catalytic activity and assembly of complex I. The sequence is that of NADH-ubiquinone oxidoreductase chain 1 (MT-ND1) from Emballonura alecto (Philippine sheath-tailed bat).